The sequence spans 65 residues: Conotoxin TsMRCL-04 (65 aa).

The N-terminal stretch at 1–20 (MRCLPVFIILLLLIPSAASA) is a signal peptide. Positions 21–48 (AQPETKDDAALASFYDNAKRTLQRHWAK) are excised as a propeptide. The residue at position 63 (E63) is a Glutamic acid 1-amide.

It belongs to the conotoxin T superfamily. Contains 2 disulfide bonds that can be either 'C1-C3, C2-C4' or 'C1-C4, C2-C3', since these disulfide connectivities have been observed for conotoxins with cysteine framework V (for examples, see AC P0DQQ7 and AC P81755). In terms of tissue distribution, expressed by the venom duct.

The protein localises to the secreted. The protein is Conotoxin TsMRCL-04 of Conus tessulatus (Tessellate cone).